The following is a 251-amino-acid chain: Hydroxyacylglutathione hydrolase (251 aa).

Residues His59, His61, Asp63, His64, His118, Asp141, and His179 each contribute to the Zn(2+) site.

It belongs to the metallo-beta-lactamase superfamily. Glyoxalase II family. In terms of assembly, monomer. Zn(2+) is required as a cofactor.

It catalyses the reaction an S-(2-hydroxyacyl)glutathione + H2O = a 2-hydroxy carboxylate + glutathione + H(+). The protein operates within secondary metabolite metabolism; methylglyoxal degradation; (R)-lactate from methylglyoxal: step 2/2. Thiolesterase that catalyzes the hydrolysis of S-D-lactoyl-glutathione to form glutathione and D-lactic acid. In Prochlorococcus marinus (strain NATL2A), this protein is Hydroxyacylglutathione hydrolase.